A 333-amino-acid chain; its full sequence is Homeobox protein engrailed-2 (333 aa).

3 disordered regions span residues methionine 1–methionine 49, glycine 95–leucine 206, and serine 223–alanine 250. Gly residues-rich tracts occupy residues proline 25–serine 36 and glycine 95–glycine 117. Low complexity-rich tracts occupy residues proline 142 to proline 151 and leucine 191 to serine 200. Residues aspartate 244 to threonine 303 constitute a DNA-binding region (homeobox).

This sequence belongs to the engrailed homeobox family.

It localises to the nucleus. The protein is Homeobox protein engrailed-2 (EN2) of Homo sapiens (Human).